A 141-amino-acid polypeptide reads, in one-letter code: Nucleoside diphosphate kinase (141 aa).

Residues lysine 11, phenylalanine 59, arginine 87, threonine 93, arginine 104, and asparagine 114 each coordinate ATP. The active-site Pros-phosphohistidine intermediate is the histidine 117.

This sequence belongs to the NDK family. Homotetramer. Requires Mg(2+) as cofactor.

It is found in the cytoplasm. It carries out the reaction a 2'-deoxyribonucleoside 5'-diphosphate + ATP = a 2'-deoxyribonucleoside 5'-triphosphate + ADP. The enzyme catalyses a ribonucleoside 5'-diphosphate + ATP = a ribonucleoside 5'-triphosphate + ADP. In terms of biological role, major role in the synthesis of nucleoside triphosphates other than ATP. The ATP gamma phosphate is transferred to the NDP beta phosphate via a ping-pong mechanism, using a phosphorylated active-site intermediate. The sequence is that of Nucleoside diphosphate kinase from Nitrosospira multiformis (strain ATCC 25196 / NCIMB 11849 / C 71).